Consider the following 555-residue polypeptide: Wee1-like protein kinase 2 (555 aa).

Residues 1-112 (MADTETDQGL…NFSTPKNSLG (112 aa)) form a disordered region. Position 15 is a phosphoserine; by CaMK2 and PKA (Ser-15). Polar residues predominate over residues 26–41 (EGQMTAQDIGGAQSQK). Over residues 57-72 (TRDELHTSLSRDKESP) the composition is skewed to basic and acidic residues. Ser-71 is modified (phosphoserine). The span at 102–112 (TNFSTPKNSLG) shows a compositional bias: polar residues. Residues 167–169 (KRK) carry the Nuclear localization signal motif. The 278-residue stretch at 208-485 (FFEIEKIGVG…ARSRILWPFL (278 aa)) folds into the Protein kinase domain. ATP-binding positions include 214 to 222 (IGVGEFGTV) and Lys-237. The Nuclear export signal motif lies at 310–324 (KLKDILLQISLGLKY). The active-site Proton acceptor is Asp-334. Mg(2+)-binding residues include Asn-339 and Asp-375. Positions 488-514 (TDELQKQLNLEKSKTATLKRELKKARH) form a coiled coil.

The protein belongs to the protein kinase superfamily. Ser/Thr protein kinase family. WEE1 subfamily. Post-translationally, phosphorylated by PKA at Ser-15 in vitro, leading to activate kinase activity. Phosphorylation at Ser-15 by CaMK2, leading to increase its activity and promote metaphase II exit during egg activation. As to expression, ovary-specific.

Its subcellular location is the cytoplasm. It is found in the nucleus. The enzyme catalyses L-tyrosyl-[protein] + ATP = O-phospho-L-tyrosyl-[protein] + ADP + H(+). Oocyte-specific protein tyrosine kinase that phosphorylates and inhibits CDK1 and acts as a key regulator of meiosis during both prophase I and metaphase II. Required to maintain meiotic arrest in oocytes during the germinal vesicle (GV) stage, a long period of quiescence at dictyate prophase I, by phosphorylating CDK1 at 'Tyr-15', leading to inhibit CDK1 activity and prevent meiotic reentry. Also required for metaphase II exit during egg activation by phosphorylating CDK1 at 'Tyr-15', to ensure exit from meiosis in oocytes and promote pronuclear formation. The polypeptide is Wee1-like protein kinase 2 (Wee2) (Mus musculus (Mouse)).